Consider the following 102-residue polypeptide: Small ribosomal subunit protein uS10 (102 aa).

Belongs to the universal ribosomal protein uS10 family. Part of the 30S ribosomal subunit.

Its function is as follows. Involved in the binding of tRNA to the ribosomes. The polypeptide is Small ribosomal subunit protein uS10 (Streptococcus pyogenes serotype M3 (strain SSI-1)).